A 299-amino-acid chain; its full sequence is Protein N-terminal and lysine N-methyltransferase EFM7 (299 aa).

S-adenosyl-L-methionine is bound by residues Trp-74, 100 to 102, Asp-122, Trp-155, and Ser-178; that span reads GAG.

It belongs to the class I-like SAM-binding methyltransferase superfamily. EFM7 family.

The protein localises to the cytoplasm. Functionally, S-adenosyl-L-methionine-dependent protein methyltransferase that trimethylates the N-terminal glycine 'Gly-2' of elongation factor 1-alpha, before also catalyzing the mono- and dimethylation of 'Lys-3'. The chain is Protein N-terminal and lysine N-methyltransferase EFM7 from Cryptococcus neoformans var. neoformans serotype D (strain B-3501A) (Filobasidiella neoformans).